A 1185-amino-acid chain; its full sequence is Adhesion G-protein coupled receptor G6 (1185 aa).

An N-terminal signal peptide occupies residues 1–32; that stretch reads MISFISGRWWRWKFQNTLAVFLLLICLSTSVA. The Extracellular segment spans residues 33 to 849; the sequence is QSCQSSTSCN…AELIDEKNNR (817 aa). A disulfide bridge connects residues Cys41 and Cys67. Positions 41 to 149 constitute a CUB domain; that stretch reads CNVVLTDSQG…KGFHISYKQV (109 aa). Residues 41 to 354 are mediates interaction with type IV collagen; sequence CNVVLTDSQG…SSTQTDSTLS (314 aa). Residues 41-839 form an inhibits receptor signaling in absence of type IV collagen region; sequence CNVVLTDSQG…FGILMDVSRA (799 aa). The N-linked (GlcNAc...) asparagine glycan is linked to Asn68. 2 residues coordinate Ca(2+): Glu89 and Asp97. An intrachain disulfide couples Cys94 to Cys111. A glycan (N-linked (GlcNAc...) asparagine) is linked at Asn121. Positions 134, 136, and 137 each coordinate Ca(2+). Residues 154–355 enclose the Pentraxin (PTX) domain; sequence RNQKVTMPKS…STQTDSTLSC (202 aa). 3 cysteine pairs are disulfide-bonded: Cys185–Cys248, Cys229–Cys271, and Cys369–Cys375. N-linked (GlcNAc...) asparagine glycosylation is found at Asn395, Asn429, Asn470, Asn539, Asn550, Asn562, Asn565, Asn613, Asn680, Asn691, Asn719, Asn763, Asn799, and Asn818. 2 cysteine pairs are disulfide-bonded: Cys508–Cys544 and Cys532–Cys563. The region spanning 658-840 is the GAIN-B domain; sequence PSLTISSKNL…GILMDVSRAA (183 aa). Intrachain disulfides connect Cys790-Cys822 and Cys809-Cys824. The GPS stretch occupies residues 790-840; it reads CVFWDFNLQNYSGGCNSDGCKVGSDSNSNRTVCLCNHLTHFGILMDVSRAA. The stachel stretch occupies residues 829 to 837; that stretch reads HFGILMDVS. A helical membrane pass occupies residues 850–870; sequence VLTFITYIGCGISAIFSAATL. The Cytoplasmic segment spans residues 871 to 886; sequence LTYIAFEKLRRDYPSK. Residues 887–907 traverse the membrane as a helical segment; the sequence is ILMNLSTSLLFLNMVFLLDGW. The Extracellular segment spans residues 908 to 915; sequence LASYEIKE. The helical transmembrane segment at 916-936 threads the bilayer; it reads LCVTVAVFLHFFLLTSFTWMG. At 937–957 the chain is on the cytoplasmic side; it reads LESIHMYIALVKVFNTYIRRY. Residues 958–978 form a helical membrane-spanning segment; that stretch reads ILKFCIVGWGVPAAIVGIVLA. Residues 979 to 1013 lie on the Extracellular side of the membrane; the sequence is VSKDSYGKNYYGKGKDGQGTSEFCWILNPVVFYVT. The chain crosses the membrane as a helical span at residues 1014-1034; sequence CVAYFSIIFLMNVAMFIVVMI. At 1035–1057 the chain is on the cytoplasmic side; the sequence is QICGRNGKRSNRTLREDILRNLR. A helical membrane pass occupies residues 1058–1080; sequence SVVSLTFLLGMTWGFAFFAWGPV. Residues 1081-1083 lie on the Extracellular side of the membrane; the sequence is SLA. Residues 1084-1106 form a helical membrane-spanning segment; it reads FMYLFTIFNSLQGLFIFVFHCAL. Residue Asn1092 coordinates 17alpha-hydroxyprogesterone. At 1107–1185 the chain is on the cytoplasmic side; it reads KENVQKQWRR…RHSNADSTLQ (79 aa). Residues 1138–1160 form a disordered region; the sequence is NTKKVSSDNLGKSLSSSSFGSTT. Residues 1144 to 1158 are compositionally biased toward low complexity; that stretch reads SDNLGKSLSSSSFGS.

It belongs to the G-protein coupled receptor 2 family. Adhesion G-protein coupled receptor (ADGR) subfamily. Post-translationally, autoproteolytically processed at the GPS region of the GAIN-B domain; this cleavage modulates receptor activity. Expressed in Schwann cells of the posterior lateral line nerve and in brain.

It localises to the cell membrane. Its activity is regulated as follows. Forms a heterodimer of 2 chains generated by proteolytic processing that remain associated through non-covalent interactions mediated by the GAIN-B domain. In the inactivated receptor, the Stachel sequence (also named stalk) is embedded in the GAIN-B domain, where it adopts a beta-strand conformation. On activation, the Stachel moves into the 7 transmembrane region and adopts a twisted hook-shaped configuration that forms contacts within the receptor, leading to coupling of a G-alpha protein, which activates signaling. The cleaved GAIN-B and N-terminal domains can then dissociate from the rest of the receptor. Functionally, adhesion G-protein coupled receptor (aGPCR) for steroid hormones, such as progesterone and 17alpha-hydroxyprogesterone (17OHP). Ligand binding causes a conformation change that triggers signaling via guanine nucleotide-binding proteins (G proteins) and modulates the activity of downstream effectors, such as adenylate cyclase. Adgrg6 is coupled to G(i) G alpha proteins and mediates inhibition of adenylate cyclase. Also able to couple to G(q) G proteins. Involved in myelination of the peripheral nervous system: required for differentiation of promyelinating Schwann cells and for normal myelination of axons. G-protein coupled receptor activity can also be activated by type IV collagen, a major constituent of the basement membrane. Also plays a role inner ear development. The protein is Adhesion G-protein coupled receptor G6 (adgrg6) of Danio rerio (Zebrafish).